Reading from the N-terminus, the 237-residue chain is 7-cyano-7-deazaguanine synthase (237 aa).

15-25 (LSGGMDSTVCA) contacts ATP. Zn(2+) is bound by residues Cys197, Cys205, Cys208, and Cys211.

The protein belongs to the QueC family. The cofactor is Zn(2+).

The catalysed reaction is 7-carboxy-7-deazaguanine + NH4(+) + ATP = 7-cyano-7-deazaguanine + ADP + phosphate + H2O + H(+). The protein operates within purine metabolism; 7-cyano-7-deazaguanine biosynthesis. In terms of biological role, catalyzes the ATP-dependent conversion of 7-carboxy-7-deazaguanine (CDG) to 7-cyano-7-deazaguanine (preQ(0)). In Koribacter versatilis (strain Ellin345), this protein is 7-cyano-7-deazaguanine synthase.